The primary structure comprises 513 residues: L-threonine dehydratase biosynthetic IlvA (513 aa).

N6-(pyridoxal phosphate)lysine is present on K63. Pyridoxal 5'-phosphate is bound by residues N90, 189–193 (GGGGL), and S316. 2 ACT-like domains span residues 340–411 (ALLA…DMSD) and 433–504 (RLYT…DVTK).

It belongs to the serine/threonine dehydratase family. In terms of assembly, homotetramer. The cofactor is pyridoxal 5'-phosphate.

It catalyses the reaction L-threonine = 2-oxobutanoate + NH4(+). It functions in the pathway amino-acid biosynthesis; L-isoleucine biosynthesis; 2-oxobutanoate from L-threonine: step 1/1. Its function is as follows. Catalyzes the anaerobic formation of alpha-ketobutyrate and ammonia from threonine in a two-step reaction. The first step involved a dehydration of threonine and a production of enamine intermediates (aminocrotonate), which tautomerizes to its imine form (iminobutyrate). Both intermediates are unstable and short-lived. The second step is the nonenzymatic hydrolysis of the enamine/imine intermediates to form 2-ketobutyrate and free ammonia. In the low water environment of the cell, the second step is accelerated by RidA. This Haemophilus influenzae (strain ATCC 51907 / DSM 11121 / KW20 / Rd) protein is L-threonine dehydratase biosynthetic IlvA (ilvA).